Consider the following 171-residue polypeptide: Protein GrpE (171 aa).

The interval 1–22 (MNHEQPDIESQQSAADAAATAG) is disordered.

Belongs to the GrpE family. Homodimer.

The protein localises to the cytoplasm. In terms of biological role, participates actively in the response to hyperosmotic and heat shock by preventing the aggregation of stress-denatured proteins, in association with DnaK and GrpE. It is the nucleotide exchange factor for DnaK and may function as a thermosensor. Unfolded proteins bind initially to DnaJ; upon interaction with the DnaJ-bound protein, DnaK hydrolyzes its bound ATP, resulting in the formation of a stable complex. GrpE releases ADP from DnaK; ATP binding to DnaK triggers the release of the substrate protein, thus completing the reaction cycle. Several rounds of ATP-dependent interactions between DnaJ, DnaK and GrpE are required for fully efficient folding. This Stenotrophomonas maltophilia (strain K279a) protein is Protein GrpE.